The sequence spans 395 residues: Teichoic acid D-alanyltransferase (395 aa).

Over 1–6 (MTPYSS) the chain is Extracellular. A helical membrane pass occupies residues 7-26 (FLFFILLGILLLPTIILGLN). Over 27-30 (GKRF) the chain is Cytoplasmic. A helical transmembrane segment spans residues 31–46 (QAYNMFISIIILALIF). At 47–50 (SHDL) the chain is on the extracellular side. The chain crosses the membrane as a helical span at residues 51-76 (HGVIALCLFTIWQVLLISGYLAYRQK). Residues 77-79 (ANS) are Cytoplasmic-facing. Residues 80 to 104 (GFVFCGAVIASILPLFLSKIWPFLS) form a helical membrane-spanning segment. The Extracellular portion of the chain corresponds to 105–120 (HPQPHHPPHNLISFLG). Residues 121-137 (ISYLTFKGVQLIMEARD) form a helical membrane-spanning segment. At 138–145 (GLLKEQLP) the chain is on the cytoplasmic side. The stretch at 146–175 (LHRLLYFILFFPTISSGPIDRYRRFVKDEQ) is an intramembrane region. Over 176-179 (KAWT) the chain is Cytoplasmic. Residues 180–223 (KEEYADLLYTGIHKIFIGFLYKFIIGYAINTYFIMNLPAITHNK) traverse the membrane as a helical segment. Position 224 (Ile-224) is a topological domain, extracellular. The helical transmembrane segment at 225-256 (LGNLLYMYGYSMYLFFDFAGYTMFAVGVSYIM) threads the bilayer. Residues 257-266 (GIKSPENFNK) lie on the Cytoplasmic side of the membrane. An intramembrane segment occupies 267–303 (PFISKNIKDFWNRWHMSLSFWFRDYVFMRFVFWMTKK). Residues 304-308 (KWIKN) are Cytoplasmic-facing. A helical membrane pass occupies residues 309–328 (RMAVSNIGYFLLFMLMGVWH). Residue His-328 is part of the active site. Residues 329–333 (GLAPQ) are Extracellular-facing. The helical transmembrane segment at 334-351 (YIIYGLYHAVLMTCYNFF) threads the bilayer. Residues 352 to 364 (EKWNKKYKWLPSN) lie on the Cytoplasmic side of the membrane. Residues 365–387 (RWTTILAIVITFHFVCFGFYIFS) form a helical membrane-spanning segment. The Extracellular portion of the chain corresponds to 388–395 (GKPFHHHH).

It belongs to the membrane-bound acyltransferase family.

The protein localises to the cell membrane. Its pathway is cell wall biogenesis; lipoteichoic acid biosynthesis. In terms of biological role, O-acyltransferase that catalyzes D-alanylation of both teichoic acid and lipoteichoic acid (LTA). D-alanylation of LTA plays an important role in modulating the properties of the cell wall in Gram-positive bacteria, influencing the net charge of the cell wall. Catalyzes D-alanylation from DltC carrier protein. The chain is Teichoic acid D-alanyltransferase from Bacillus subtilis (strain 168).